Here is a 308-residue protein sequence, read N- to C-terminus: 1,4-dihydroxy-2-naphthoate octaprenyltransferase (308 aa).

The Cytoplasmic portion of the chain corresponds to 1-20; that stretch reads MTEQQISRTQAWLESLRPKT. The helical transmembrane segment at 21 to 41 threads the bilayer; that stretch reads LPLAFAAIIVGTALAWWQGHF. Residue D42 is a topological domain, periplasmic. A helical membrane pass occupies residues 43–63; sequence PLVALLALITAGLLQILSNLA. Topologically, residues 64 to 97 are cytoplasmic; the sequence is NDYGDAVKGSDKPDRIGPLRGMQKGVITQQEMKR. Residues 98–118 form a helical membrane-spanning segment; it reads ALIITVVLICLSGLALVAVAC. Residues 119-123 lie on the Periplasmic side of the membrane; sequence HTLAD. Residues 124 to 144 traverse the membrane as a helical segment; the sequence is FVGFLILGGLSIIAAITYTVG. Residues 145–148 lie on the Cytoplasmic side of the membrane; sequence NRPY. The chain crosses the membrane as a helical span at residues 149–169; the sequence is GYIGLGDISVLVFFGWLSVMG. At 170–176 the chain is on the periplasmic side; sequence SWYLQAH. Residues 177–197 traverse the membrane as a helical segment; the sequence is TLIPALILPATACGLLATAVL. Residues 198 to 227 are Cytoplasmic-facing; it reads NINNLRDINSDRENGKNTLVVRLGEVNARR. Residues 228 to 247 form a helical membrane-spanning segment; that stretch reads YHACLLMGSLVCLALFNLFS. Residues 248 to 250 lie on the Periplasmic side of the membrane; the sequence is LHS. Residues 251–270 traverse the membrane as a helical segment; it reads LWGWLFLLAAPLLVKQARYV. Residues 271–286 are Cytoplasmic-facing; sequence MREMDPVAMRPMLERT. A helical transmembrane segment spans residues 287–307; it reads VKGALLTNLLFVLGIFLSQWA. Residue A308 is a topological domain, periplasmic.

The protein belongs to the MenA family. Type 1 subfamily.

It is found in the cell inner membrane. The catalysed reaction is an all-trans-polyprenyl diphosphate + 1,4-dihydroxy-2-naphthoate + H(+) = a 2-demethylmenaquinol + CO2 + diphosphate. The protein operates within quinol/quinone metabolism; menaquinone biosynthesis; menaquinol from 1,4-dihydroxy-2-naphthoate: step 1/2. Functionally, conversion of 1,4-dihydroxy-2-naphthoate (DHNA) to demethylmenaquinone (DMK). Attaches octaprenylpyrophosphate, a membrane-bound 40-carbon side chain to DHNA. The conversion of DHNA to DMK proceeds in three stages: the removal of the carboxyl group of DHNA as CO(2), the attachment of the isoprenoid side chain, and a quinol-to-quinone oxidation, which is thought to be spontaneous. In Escherichia coli (strain K12), this protein is 1,4-dihydroxy-2-naphthoate octaprenyltransferase.